The following is a 61-amino-acid chain: Bowman-Birk type proteinase inhibitor B5 (61 aa).

Intrachain disulfides connect Cys-5/Cys-60, Cys-6/Cys-22, Cys-9/Cys-56, Cys-12/Cys-20, Cys-29/Cys-36, and Cys-33/Cys-48.

The protein belongs to the Bowman-Birk serine protease inhibitor family. Expressed in bulb (at protein level).

Functionally, serine protease inhibitor. Inhibits trypsin (Ki = 41 nM) and weakly inhibits chymotrypsin (Ki = 410 nM). Does not inhibit bacterial subtilisin. This is Bowman-Birk type proteinase inhibitor B5 from Hyacinthus orientalis (Common hyacinth).